The primary structure comprises 423 residues: Amino sugar nitrososynthase RubN8 (423 aa).

It belongs to the acyl-CoA dehydrogenase family. It depends on FAD as a cofactor.

It functions in the pathway antibiotic biosynthesis. Its function is as follows. Nitrososynthase involved in the biosynthesis of rubradirin, an ansamycin antibiotic. In vitro, catalyzes the double-oxidation of TDP-L-epi-vancosamine to TDP-L-epi-vancosonitrose. In vivo, probably catalyzes the formation of D-rubranitrose, the nitro sugar moiety of rubradirin. This is Amino sugar nitrososynthase RubN8 from Streptomyces rubradiris (Streptomyces achromogenes subsp. rubradiris).